Here is a 117-residue protein sequence, read N- to C-terminus: Appetite-regulating hormone (117 aa).

Residues methionine 1–alanine 23 form the signal peptide. Serine 26 carries the O-decanoyl serine; alternate lipid modification. Serine 26 is lipidated: O-hexanoyl serine; alternate. Serine 26 is lipidated: O-octanoyl serine; alternate. Residues serine 29–glycine 67 are disordered. Residues glutamate 31–lysine 43 show a composition bias toward basic and acidic residues. Positions alanine 52–glutamine 75 are cleaved as a propeptide — removed in mature form. At leucine 98 the chain carries Leucine amide. The propeptide at glycine 99–lysine 117 is removed in mature form.

This sequence belongs to the motilin family. O-octanoylated by GOAT/MBOAT4. O-octanoylation is essential for ghrelin activity. In terms of processing, amidation of Leu-98 is essential for obestatin activity.

Its subcellular location is the secreted. In terms of biological role, ghrelin is the ligand for growth hormone secretagogue receptor type 1 (GHSR). Induces the release of growth hormone from the pituitary. Has an appetite-stimulating effect, induces adiposity and stimulates gastric acid secretion. Involved in growth regulation. Functionally, obestatin may be the ligand for GPR39. May have an appetite-reducing effect resulting in decreased food intake. May reduce gastric emptying activity and jejunal motility. The chain is Appetite-regulating hormone (GHRL) from Papio hamadryas (Hamadryas baboon).